Consider the following 314-residue polypeptide: Nodulation protein D 1 (314 aa).

Positions 6–63 constitute an HTH lysR-type domain; sequence LDLNLLVALDALMTERNLTAAARQINLSQPAMSAAIARLRSYFRDELFTMRGRELVPT. The H-T-H motif DNA-binding region spans 23-42; sequence LTAAARQINLSQPAMSAAIA.

This sequence belongs to the LysR transcriptional regulatory family.

In terms of biological role, nodD regulates the expression of the nodABCFE genes which encode other nodulation proteins. NodD is also a negative regulator of its own expression. Binds flavonoids as inducers. The chain is Nodulation protein D 1 (nodD1) from Bradyrhizobium elkanii.